Here is a 424-residue protein sequence, read N- to C-terminus: Putative histone deacetylase complex subunit cti6 (424 aa).

4 disordered regions span residues 1–49 (MPSN…GEVT), 117–155 (SKYL…TMNS), 170–341 (KEKS…PDGT), and 381–405 (AQSA…ETLR). Residues 48–103 (VTRCVCGIVESDDEASDGGLYIQCDQCSVWQHGNCVGFADESEVPEVYYCEICHPE) form a PHD-type zinc finger. Low complexity predominate over residues 127 to 137 (EASQTEESSST). Phosphoserine is present on serine 187. Over residues 241 to 256 (DAPEEETVDTVEEIAD) the composition is skewed to acidic residues. Residues 257–266 (EEKHSVKEES) show a composition bias toward basic and acidic residues. The span at 272-287 (QSSQQSTITSISTTTR) shows a compositional bias: low complexity. The span at 294–303 (REAAAEDKAD) shows a compositional bias: basic and acidic residues. Positions 313–324 (SKTRKVGGRRGK) are enriched in basic residues. Residues 392–405 (SSKEGPEEEKETLR) are compositionally biased toward basic and acidic residues.

The protein resides in the cytoplasm. The protein localises to the nucleus. Its function is as follows. Could be a component of the RPD3C(L) histone deacetylase complex (HDAC). In Schizosaccharomyces pombe (strain 972 / ATCC 24843) (Fission yeast), this protein is Putative histone deacetylase complex subunit cti6 (cti6).